The sequence spans 177 residues: Endothelin-2 (177 aa).

The N-terminal stretch at 1–23 (MPTALCSIALALLVALHEGKSQA) is a signal peptide. The propeptide occupies 24–45 (ATTPIPEQPAPLPRARGSHLRT). 2 disulfides stabilise this stretch: Cys-48/Cys-62 and Cys-50/Cys-58. Residues 69-177 (VNTPGQTAPY…RPTHSRQRKR (109 aa)) constitute a propeptide that is removed on maturation. Residues 95 to 110 (CECYSARDPACATFCH) are endothelin-like. Residues 155-177 (HFARQQQKPTRETRPTHSRQRKR) form a disordered region.

Belongs to the endothelin/sarafotoxin family. In terms of tissue distribution, expressed in various organs including heart, lung, liver, kidney, gastrointestinal tract, uterus and ovary, but not in spleen. Within the gastrointestinal tract, gene expression was detected in rumen, a ruminant-specific digestive organ, as well as stomach, duodenum and colon.

The protein resides in the secreted. Functionally, endothelins are endothelium-derived vasoconstrictor peptides. In Bos taurus (Bovine), this protein is Endothelin-2 (EDN2).